We begin with the raw amino-acid sequence, 1124 residues long: Putative DNA mismatch repair protein mutS homolog L359 (1124 aa).

Ser779 to Ser786 provides a ligand contact to ATP.

This sequence belongs to the DNA mismatch repair MutS family.

Its function is as follows. May be involved in DNA-mismatch repair. In Acanthamoeba polyphaga (Amoeba), this protein is Putative DNA mismatch repair protein mutS homolog L359.